Consider the following 110-residue polypeptide: Protein YcgL (110 aa).

One can recognise a YcgL domain in the interval 14–98 (MFCVIYRSSK…PPEDLLKQHL (85 aa)). A disordered region spans residues 87–110 (PPPPEDLLKQHLSSVGQNTSSADR). Over residues 97-110 (HLSSVGQNTSSADR) the composition is skewed to polar residues.

The sequence is that of Protein YcgL from Salmonella newport (strain SL254).